The primary structure comprises 206 residues: Max dimerization protein 3 (206 aa).

Positions 8–25 (IQVLLQAAEFLERREREA) are interaction with SIN3A and SIN3B. The region spanning 57-109 (SGRHVHNELEKRRRAQLKRCLEQLRQQMPLGVDHTRYTTLSLLRGARMHIQKL) is the bHLH domain.

In terms of assembly, efficient DNA binding requires dimerization with another bHLH protein. Binds DNA as a heterodimer with MAX. Interacts with SIN3A AND SIN3B. Interacts with RNF17.

The protein resides in the nucleus. Transcriptional repressor. Binds with MAX to form a sequence-specific DNA-binding protein complex which recognizes the core sequence 5'-CAC[GA]TG-3'. Antagonizes MYC transcriptional activity by competing for MAX and suppresses MYC dependent cell transformation. This chain is Max dimerization protein 3 (Mxd3), found in Rattus norvegicus (Rat).